A 195-amino-acid chain; its full sequence is MARCKS-related protein (195 aa).

The segment at 1–195 (MGSQSSKAPR…PTPASAEQNE (195 aa)) is disordered. Glycine 2 carries the N-myristoyl glycine lipid modification. Threonine 14 carries the phosphothreonine modification. The segment covering 16 to 26 (EEAAGASPAKA) has biased composition (low complexity). Phosphoserine is present on residues serine 22, serine 36, serine 41, and serine 48. A compositionally biased stretch (low complexity) spans 53–64 (GTDEAAGATGDA). Phosphoserine is present on serine 71. The segment covering 76–85 (AKGEVPPKET) has biased composition (basic and acidic residues). At threonine 85 the chain carries Phosphothreonine. Residues 86–98 (PKKKKKFSFKKPF) are compositionally biased toward basic residues. The segment at 87–110 (KKKKKFSFKKPFKLSGLSFKRNRK) is effector domain involved in lipid-binding and calmodulin-binding. A phosphoserine mark is found at serine 93, serine 101, serine 104, serine 119, serine 120, and serine 135. Position 148 is a phosphothreonine (threonine 148). Phosphoserine is present on residues serine 151, serine 162, and serine 165. The span at 153–195 (EPQAKGAEASAASEEEAGPQATEPSTPSGPESGPTPASAEQNE) shows a compositional bias: low complexity. A phosphothreonine mark is found at threonine 178 and threonine 187.

The protein belongs to the MARCKS family. In terms of assembly, binds to filamentous actin (F-actin), but not to monomeric G-actin, independently of its phosphorylation status. In terms of processing, phosphorylated. Phosphorylation at Ser-120 and Thr-178 is non-redundantly catalyzed by MAPK8 in vivo. Phosphorylation at Thr-148 is preferentially catalyzed by MAPK8 in vivo, but this modification can also be catalyzed by other kinases in the absence of MAPK8. May be phosphorylated by protein kinase C, which disrupts the interaction with calmodulin.

The protein localises to the cytoplasm. Its subcellular location is the cytoskeleton. It is found in the cell membrane. Controls cell movement by regulating actin cytoskeleton homeostasis and filopodium and lamellipodium formation. When unphosphorylated, induces cell migration. When phosphorylated by MAPK8, induces actin bundles formation and stabilization, thereby reducing actin plasticity, hence restricting cell movement, including neuronal migration. May be involved in coupling the protein kinase C and calmodulin signal transduction systems. The chain is MARCKS-related protein (MARCKSL1) from Homo sapiens (Human).